The primary structure comprises 184 residues: Lipoprotein signal peptidase (184 aa).

Helical transmembrane passes span 23–43 (FLYY…FQVF), 88–108 (PGLV…FLVF), and 110–130 (TSYN…GNFF). Active-site residues include Asp-142 and Asp-157. A helical membrane pass occupies residues 156–176 (ADCCITFSFIGLFLSFLIQFF).

The protein belongs to the peptidase A8 family.

Its subcellular location is the cell membrane. The catalysed reaction is Release of signal peptides from bacterial membrane prolipoproteins. Hydrolyzes -Xaa-Yaa-Zaa-|-(S,diacylglyceryl)Cys-, in which Xaa is hydrophobic (preferably Leu), and Yaa (Ala or Ser) and Zaa (Gly or Ala) have small, neutral side chains.. It functions in the pathway protein modification; lipoprotein biosynthesis (signal peptide cleavage). Its function is as follows. This protein specifically catalyzes the removal of signal peptides from prolipoproteins. The sequence is that of Lipoprotein signal peptidase from Mycoplasma pneumoniae (strain ATCC 29342 / M129 / Subtype 1) (Mycoplasmoides pneumoniae).